A 259-amino-acid chain; its full sequence is L-ornithine N(alpha)-acyltransferase (259 aa).

Belongs to the acetyltransferase family. OlsB subfamily.

The catalysed reaction is a (3R)-hydroxyacyl-[ACP] + L-ornithine = a lyso-ornithine lipid + holo-[ACP] + H(+). It participates in lipid metabolism. In terms of biological role, catalyzes the first step in the biosynthesis of ornithine lipids, which are phosphorus-free membrane lipids. Catalyzes the 3-hydroxyacyl-acyl carrier protein-dependent acylation of ornithine to form lyso-ornithine lipid (LOL). The sequence is that of L-ornithine N(alpha)-acyltransferase from Rhodobacter capsulatus (strain ATCC BAA-309 / NBRC 16581 / SB1003).